We begin with the raw amino-acid sequence, 274 residues long: Dermonecrotic toxin SdSicTox-betaIIB1bi (274 aa).

Histidine 5 is a catalytic residue. Mg(2+)-binding residues include glutamate 25 and aspartate 27. Residue histidine 41 is the Nucleophile of the active site. 2 disulfide bridges follow: cysteine 45-cysteine 51 and cysteine 47-cysteine 190. A Mg(2+)-binding site is contributed by aspartate 85.

The protein belongs to the arthropod phospholipase D family. Class II subfamily. The cofactor is Mg(2+). As to expression, expressed by the venom gland.

The protein resides in the secreted. The enzyme catalyses an N-(acyl)-sphingosylphosphocholine = an N-(acyl)-sphingosyl-1,3-cyclic phosphate + choline. The catalysed reaction is an N-(acyl)-sphingosylphosphoethanolamine = an N-(acyl)-sphingosyl-1,3-cyclic phosphate + ethanolamine. It catalyses the reaction a 1-acyl-sn-glycero-3-phosphocholine = a 1-acyl-sn-glycero-2,3-cyclic phosphate + choline. It carries out the reaction a 1-acyl-sn-glycero-3-phosphoethanolamine = a 1-acyl-sn-glycero-2,3-cyclic phosphate + ethanolamine. In terms of biological role, dermonecrotic toxins cleave the phosphodiester linkage between the phosphate and headgroup of certain phospholipids (sphingolipid and lysolipid substrates), forming an alcohol (often choline) and a cyclic phosphate. This toxin acts on sphingomyelin (SM). It may also act on ceramide phosphoethanolamine (CPE), lysophosphatidylcholine (LPC) and lysophosphatidylethanolamine (LPE), but not on lysophosphatidylserine (LPS), and lysophosphatidylglycerol (LPG). It acts by transphosphatidylation, releasing exclusively cyclic phosphate products as second products. Induces dermonecrosis, hemolysis, increased vascular permeability, edema, inflammatory response, and platelet aggregation. The protein is Dermonecrotic toxin SdSicTox-betaIIB1bi of Sicarius cf. damarensis (strain GJB-2008) (Six-eyed sand spider).